We begin with the raw amino-acid sequence, 164 residues long: Putative ankyrin repeat protein RBE_0585 (164 aa).

ANK repeat units follow at residues 42–107 (NQDT…VAIL) and 126–149 (DKDT…MLDY).

The protein is Putative ankyrin repeat protein RBE_0585 of Rickettsia bellii (strain RML369-C).